The sequence spans 508 residues: MGLPWYRVHTVVLNDPARLLSVHIMHTALVAGWAGSMALYELAVFDPSDPVLDPMWRQGMFVIPFMTRLGITNSWGGWNITGGTITNPGLWSYEGVAGAHIVFSGLCFLAAIWHWVYWDLEIFCDERTGKPSLDLPKIFGIHLFLSGVACFGFGAFHVTGLYGPGIWVSDPYGLTGKVQTVNPTWGVEGFDPFVPGGIASHHIAAGTLGILAGLFHLSVRPPQRLYKGLRMGNIETVLSSSIAAVFFAAFVVAGTMWYGSATTPIELFGPTRYQWDQGYFQQEIYRRVSAGLAENQSVSEAWSKIPEKLAFYDYIGNNPAKGGLFRAGSMDNGDGIAVGWLGHPVFRNKEGRELFVRRMPTFFDTFPVVLVYGFGIVRADVPFRRAESKYSVEQVGVTVEFYGGELNGVSYSDPATVKKYAIRAQLGEIFELDPATLKSYGVFRSSPRGWFTFGHASFALLFFFGHIWHGSRTLFRDVFAGIDPDLDAQVEFGAFQKLGDPTTKRQAV.

6 helical membrane-spanning segments follow: residues 21-36 (SVHIMHTALVAGWAGS), 101-115 (IVFSGLCFLAAIWHW), 140-156 (GIHLFLSGVACFGFGAF), 203-218 (IAAGTLGILAGLFHLS), 237-252 (VLSSSIAAVFFAAFVV), and 457-472 (SFALLFFFGHIWHGSR).

It belongs to the PsbB/PsbC family. PsbB subfamily. PSII is composed of 1 copy each of membrane proteins PsbA, PsbB, PsbC, PsbD, PsbE, PsbF, PsbH, PsbI, PsbJ, PsbK, PsbL, PsbM, PsbT, PsbX, PsbY, PsbZ, Psb30/Ycf12, at least 3 peripheral proteins of the oxygen-evolving complex and a large number of cofactors. It forms dimeric complexes. Requires Binds multiple chlorophylls. PSII binds additional chlorophylls, carotenoids and specific lipids. as cofactor.

The protein resides in the plastid. Its subcellular location is the chloroplast thylakoid membrane. Its function is as follows. One of the components of the core complex of photosystem II (PSII). It binds chlorophyll and helps catalyze the primary light-induced photochemical processes of PSII. PSII is a light-driven water:plastoquinone oxidoreductase, using light energy to abstract electrons from H(2)O, generating O(2) and a proton gradient subsequently used for ATP formation. The protein is Photosystem II CP47 reaction center protein of Draba nemorosa (Woodland whitlowgrass).